Reading from the N-terminus, the 74-residue chain is Large ribosomal subunit protein bL31 (74 aa).

Residues Cys16, Cys18, Cys38, and Cys41 each coordinate Zn(2+).

It belongs to the bacterial ribosomal protein bL31 family. Type A subfamily. As to quaternary structure, part of the 50S ribosomal subunit. Zn(2+) serves as cofactor.

In terms of biological role, binds the 23S rRNA. This Mycolicibacterium vanbaalenii (strain DSM 7251 / JCM 13017 / BCRC 16820 / KCTC 9966 / NRRL B-24157 / PYR-1) (Mycobacterium vanbaalenii) protein is Large ribosomal subunit protein bL31.